Reading from the N-terminus, the 932-residue chain is Protein translocase subunit SecA (932 aa).

ATP is bound by residues Gln-83, 101 to 105 (GEGKT), and Asp-491.

It belongs to the SecA family. As to quaternary structure, monomer and homodimer. Part of the essential Sec protein translocation apparatus which comprises SecA, SecYEG and auxiliary proteins SecDF. Other proteins may also be involved.

It localises to the cell inner membrane. Its subcellular location is the cellular thylakoid membrane. The protein localises to the cytoplasm. The catalysed reaction is ATP + H2O + cellular proteinSide 1 = ADP + phosphate + cellular proteinSide 2.. Functionally, part of the Sec protein translocase complex. Interacts with the SecYEG preprotein conducting channel. Has a central role in coupling the hydrolysis of ATP to the transfer of proteins into and across the cell membrane, serving as an ATP-driven molecular motor driving the stepwise translocation of polypeptide chains across the membrane. Probably participates in protein translocation into and across both the cytoplasmic and thylakoid membranes in cyanobacterial cells. The polypeptide is Protein translocase subunit SecA (Cyanothece sp. (strain PCC 7425 / ATCC 29141)).